Consider the following 361-residue polypeptide: Chorismate synthase (361 aa).

2 residues coordinate NADP(+): Arg-48 and Arg-54. FMN-binding positions include Arg-125–Ser-127, Asn-238–Ala-239, Gly-278, Lys-293–Ser-297, and Arg-319.

The protein belongs to the chorismate synthase family. In terms of assembly, homotetramer. FMNH2 is required as a cofactor.

It carries out the reaction 5-O-(1-carboxyvinyl)-3-phosphoshikimate = chorismate + phosphate. Its pathway is metabolic intermediate biosynthesis; chorismate biosynthesis; chorismate from D-erythrose 4-phosphate and phosphoenolpyruvate: step 7/7. In terms of biological role, catalyzes the anti-1,4-elimination of the C-3 phosphate and the C-6 proR hydrogen from 5-enolpyruvylshikimate-3-phosphate (EPSP) to yield chorismate, which is the branch point compound that serves as the starting substrate for the three terminal pathways of aromatic amino acid biosynthesis. This reaction introduces a second double bond into the aromatic ring system. This is Chorismate synthase from Vibrio vulnificus (strain YJ016).